A 125-amino-acid polypeptide reads, in one-letter code: Holo-[acyl-carrier-protein] synthase (125 aa).

Asp9 and Glu58 together coordinate Mg(2+).

It belongs to the P-Pant transferase superfamily. AcpS family. It depends on Mg(2+) as a cofactor.

The protein resides in the cytoplasm. The enzyme catalyses apo-[ACP] + CoA = holo-[ACP] + adenosine 3',5'-bisphosphate + H(+). Functionally, transfers the 4'-phosphopantetheine moiety from coenzyme A to a Ser of acyl-carrier-protein. This is Holo-[acyl-carrier-protein] synthase from Shewanella amazonensis (strain ATCC BAA-1098 / SB2B).